The following is a 643-amino-acid chain: E3 ubiquitin-protein ligase AMFR (643 aa).

The segment at 39 to 67 is disordered; the sequence is PEAGPGEPDQLTASLQPEPPAPARPSAGG. The next 6 membrane-spanning stretches (helical) occupy residues 82–102, 122–142, 145–165, 186–206, 215–235, and 276–296; these read LFVW…AKLI, FWNF…VQTV, VVMW…VQLC, VLSL…VCSI, TLAF…HVIL, and HIHM…VIFM. The RING-type zinc-finger motif lies at 341-379; the sequence is CAICWDSMQAARKLPCGHLFHNSCLRSWLEQDTSCPTCR. Residues 429–449 traverse the membrane as a helical segment; the sequence is IASWLPSFSVEVMHTTNILGI. Residues 456-498 enclose the CUE domain; sequence QLNAMAHQIQEMFPQVPYHLVLQDLQLTRSVEITTDNILEGRI. 2 disordered regions span residues 504–579 and 596–624; these read TQRS…DERQ and RFLN…PVTL. Ser516, Ser523, and Ser542 each carry phosphoserine. Acidic residues predominate over residues 548-563; that stretch reads TLDFGEVEVEPSEVED. Residues 564–579 are compositionally biased toward basic and acidic residues; that stretch reads FEARGSRFSKSADERQ. The interval 622-640 is VCP/p97-interacting motif (VIM); it reads VTLRRRMLAAAAERRLQKQ.

Interacts with RNF5. Also forms an ERAD complex containing VCP/p97, NGLY1; PSMC1; SAKS1 and RAD23B required for coupling retrotranslocation, ubiquitination and deglycosylation. Interacts with DERL1. Interacts (through a region distinct from the RING finger) with UBE2G2/UBC7. Component of the VCP/p97-AMFR/gp78 complex that enhances VCP/p97 binding to polyubiquitinated proteins for their degradation by the endoplasmic reticulum-associated degradation (ERAD) pathway. Interacts (via the VIM) with VCP/p97. Interacts (via its membrane domain) with INSIG1; the interaction initiates the sterol-mediated ubiquitination and degradation of HMGCR by the ERAD pathway. Interacts with AUP1, UBE2G2 and RNF139/TRC8; interaction with AUP1 facilitates interaction of AMFR with ubiquitin-conjugating enzyme UBE2G2 and ubiquitin ligase RNF139, leading to sterol-induced ubiquitination of HMGCR and its subsequent proteasomal degradation. Interacts with BAG6. Interacts with USP13 (via UBA 2 domain); the interaction is direct. Interacts with LMBR1L. Interacts with UBAC2 and CTNNB1. Interacts with C18orf32. As to quaternary structure, (Microbial infection) Interacts with Staphylococcus aureus HIgB; this interaction regulates AMFR-mediated inflammation by promoting TAB3 ubiquitination to promote TAB3-TAK1 complex formation. Post-translationally, palmitoylation of the RING-type zing finger by ZDHHC6 promotes localization to the peripheral endoplasmic reticulum. As to expression, widely expressed.

Its subcellular location is the endoplasmic reticulum membrane. The catalysed reaction is [E2 ubiquitin-conjugating enzyme]-S-ubiquitinyl-L-cysteine + [acceptor protein]-L-cysteine = [E2 ubiquitin-conjugating enzyme]-L-cysteine + [acceptor protein]-S-ubiquitinyl-L-cysteine.. The protein operates within protein modification; protein ubiquitination. E3 ubiquitin-protein ligase that mediates the polyubiquitination of lysine and cysteine residues on target proteins, such as CD3D, CYP3A4, CFTR, INSIG1, SOAT2/ACAT2 and APOB for proteasomal degradation. Component of a VCP/p97-AMFR/gp78 complex that participates in the final step of endoplasmic reticulum-associated degradation (ERAD). The VCP/p97-AMFR/gp78 complex is involved in the sterol-accelerated ERAD degradation of HMGCR through binding to the HMGCR-INSIG1 complex at the ER membrane. In addition, interaction of AMFR with AUP1 facilitates interaction of AMFR with ubiquitin-conjugating enzyme UBE2G2 and ubiquitin ligase RNF139, leading to sterol-induced HMGCR ubiquitination. The ubiquitinated HMGCR is then released from the ER into the cytosol for subsequent destruction. In addition to ubiquitination on lysine residues, catalyzes ubiquitination on cysteine residues: together with INSIG1, mediates polyubiquitination of SOAT2/ACAT2 at 'Cys-277', leading to its degradation when the lipid levels are low. Catalyzes ubiquitination and subsequent degradation of INSIG1 when cells are depleted of sterols. Mediates polyubiquitination of INSIG2 at 'Cys-215' in some tissues, leading to its degradation. Also regulates ERAD through the ubiquitination of UBL4A a component of the BAG6/BAT3 complex. Also acts as a scaffold protein to assemble a complex that couples ubiquitination, retranslocation and deglycosylation. Mediates tumor invasion and metastasis as a receptor for the GPI/autocrine motility factor. In association with LMBR1L and UBAC2, negatively regulates the canonical Wnt signaling pathway in the lymphocytes by promoting the ubiquitin-mediated degradation of CTNNB1 and Wnt receptors FZD6 and LRP6. Regulates NF-kappa-B and MAPK signaling pathways by mediating 'Lys-27'-linked polyubiquitination of TAB3 and promoting subsequent TAK1/MAP3K7 activation. Required for proper lipid homeostasis. The protein is E3 ubiquitin-protein ligase AMFR of Homo sapiens (Human).